The primary structure comprises 1144 residues: MALFRKFFHRKPPEGLLEISERVYVFDCCLTTDMLEDEDYRVYVSRIMSQLREQFPGASFMVFNFRDGDSRSRMESVLTEYDMTIMDYPRHYEGCPLLTMETVHHFLKSAESWLLLSQQNILLSHCELGGWPTLAFMLASLLLYRKQFSGEHRTLEMIYKQAPRELLQLMSPLNPLPSQLRFLQYISRRNVGSQWPPLDQALTLDCVNLRLIPDFDGEGGCRPIFRIYGQDPFMASDRTSKVLFSMPKRSKAVRQYKQADCELVKIDINCHILGDVVLECITLGSDLEREEMMFRVVFNTAFLRSNILTLNRGEIDVLWNTTDRFPKDFSAEVIFSEMGAGKKLASVDLPHMEEKDVLPMEAFAKVQEIFSEAEWLDPNSDVAVTVFNQITAANILQESLDSGSPRSPDSRSLLESALEKVKEKTKLMISENIVSSPDTSSPEKEKDTMSSHKSYADPNSILKKVDESRGLRVSVQRNVHSKIFSPRMVQSPVTSPLPNRSPTQGSPASISRFHSSPSSLGITSILHDHGSCKDEESTSSSPASPSISFLPTLHPLTSSQPKKASPQCPQSPTPVHSNGPPSAEAAVTSSPLPPLKPLRILSRPPPPPPPPPISSLRSTPSPSSTSNSIATQGPPPPPPPPPLQSHRSALSSSPLPPPLPPKKLLATTNPPPPPPPPLHSNSRMGAPTSSLVLKSPPVPPPPAPAPLSRSHNGNIPPVPGPPLGLKGRGILQNLKGQGQTRKANLKPYHWLKLTRAVQGSLWAEAQKSDEAATAPDFDISELEKLFSAVNLSSDSENNGGKSGRRARPKVEKVQLIELRRAYNCEIMLSKVKIPLPDLMSSVLALDESVIDVDQVDNLIKFCPTKEEAELLKGFTGNKETLGRCEQFFLELLKVPRVETKLRVFSFKIQFHSQVTDLRRGLNTIHSAANEVRGSAKLKRIMQTILSLGNALNHGTARGSAIGFRLDSLLKLTDTRSRNSKMTLMHYLCKVLAEKLPELLNFPKDLVSLEAATKIQLKYLAEEMQAISKGLEKVVQEFTASETDGQISKHFRMNLKEFLSVAEGEVRSLASLYSTVGGSADALALYFGEDPARVPFEQVVSTLQNFVRIFVRSHEENCKQVEFEKKRAQKEAENEKLKKGVYNEN.

Residues Leu-17–Ser-193 form the Phosphatase tensin-type domain. Catalysis depends on Cys-126, which acts as the Phosphocysteine intermediate. The C2 tensin-type domain maps to Asp-199–Met-338. Disordered regions lie at residues Ile-429 to Lys-463 and Lys-482 to Gly-729. Residues Ser-441 to Ser-450 are compositionally biased toward basic and acidic residues. Polar residues predominate over residues Ser-491 to Ile-522. Over residues Leu-526–Glu-536 the composition is skewed to basic and acidic residues. Low complexity predominate over residues Thr-538–Ser-548. The span at Pro-555–Pro-580 shows a compositional bias: polar residues. A compositionally biased stretch (pro residues) spans Arg-603–Ile-613. The segment covering Ser-614–Ile-629 has biased composition (low complexity). The span at Gly-633–Leu-643 shows a compositional bias: pro residues. A compositionally biased stretch (low complexity) spans Gln-644–Ser-653. Residues Asn-669 to Leu-678 show a composition bias toward pro residues. A compositionally biased stretch (low complexity) spans His-679–Ser-695. Residues Pro-696–Ala-705 show a composition bias toward pro residues. One can recognise an FH2 domain in the interval Lys-735–Lys-1135.

Belongs to the formin-like family. Class-II subfamily.

The protein is Formin-like protein 18 (FH18) of Arabidopsis thaliana (Mouse-ear cress).